The primary structure comprises 353 residues: D-alanine--D-alanine ligase (353 aa).

One can recognise an ATP-grasp domain in the interval 141–349; sequence KAAFAAAGLP…LEELVSQLVI (209 aa). Position 176–231 (176–231) interacts with ATP; the sequence is EAKLKYPCFVKPANLGSSVGISKAQNRNELLIGLDKAASLDRRIVVEQGVSARELE. Residues aspartate 302, glutamate 316, and asparagine 318 each contribute to the Mg(2+) site.

It belongs to the D-alanine--D-alanine ligase family. Mg(2+) serves as cofactor. Mn(2+) is required as a cofactor.

Its subcellular location is the cytoplasm. It carries out the reaction 2 D-alanine + ATP = D-alanyl-D-alanine + ADP + phosphate + H(+). It participates in cell wall biogenesis; peptidoglycan biosynthesis. Functionally, cell wall formation. This is D-alanine--D-alanine ligase from Prochlorococcus marinus (strain MIT 9313).